We begin with the raw amino-acid sequence, 859 residues long: Villin-like protein (859 aa).

6 Gelsolin-like repeats span residues 24–76 (LKML…EARE), 148–188 (VSAT…SEKA), 264–308 (LVVQ…QEKK), 401–450 (LQRQ…EDTK), 521–561 (TRTM…DQRE), and 624–665 (LVLT…WKKE). Residues 793-859 (SMVNGSLPRE…QQAKKKLGFF (67 aa)) enclose the HP domain.

This sequence belongs to the villin/gelsolin family.

In terms of biological role, possible tumor suppressor. This chain is Villin-like protein, found in Mus musculus (Mouse).